Consider the following 138-residue polypeptide: MQRNLTQSKEALLKSYNSRLKEDIRSMRENFEEIIRLAKGENDTQLSKITQCEQDTYETQVRAANIVRAGESLMKLVSDIKQYLILNDFHSVNEAICSNSTLYRTTQIDRDNKLMAVRDDMAADLYDLEEEYYTSIYK.

The stretch at L13 to G40 forms a coiled coil.

The protein belongs to the Mediator complex subunit 22 family. In terms of assembly, component of the Mediator complex.

It is found in the nucleus. Its function is as follows. Component of the Mediator complex, a coactivator involved in the regulated transcription of nearly all RNA polymerase II-dependent genes. Mediator functions as a bridge to convey information from gene-specific regulatory proteins to the basal RNA polymerase II transcription machinery. Mediator is recruited to promoters by direct interactions with regulatory proteins and serves as a scaffold for the assembly of a functional preinitiation complex with RNA polymerase II and the general transcription factors. The chain is Mediator of RNA polymerase II transcription subunit 22 (MED22) from Anopheles gambiae (African malaria mosquito).